Consider the following 453-residue polypeptide: Tubulin alpha chain (453 aa).

GTP is bound at residue Gln-11. N6-acetyllysine is present on Lys-40. Residues Glu-71, Gly-144, Thr-145, Thr-179, Asn-206, and Asn-228 each coordinate GTP. Glu-71 is a Mg(2+) binding site. Glu-254 is an active-site residue.

It belongs to the tubulin family. As to quaternary structure, dimer of alpha and beta chains. A typical microtubule is a hollow water-filled tube with an outer diameter of 25 nm and an inner diameter of 15 nM. Alpha-beta heterodimers associate head-to-tail to form protofilaments running lengthwise along the microtubule wall with the beta-tubulin subunit facing the microtubule plus end conferring a structural polarity. Microtubules usually have 13 protofilaments but different protofilament numbers can be found in some organisms and specialized cells. It depends on Mg(2+) as a cofactor. Post-translationally, undergoes a tyrosination/detyrosination cycle, the cyclic removal and re-addition of a C-terminal tyrosine residue by the enzymes tubulin tyrosine carboxypeptidase (TTCP) and tubulin tyrosine ligase (TTL), respectively. In terms of processing, acetylation of alpha chains at Lys-40 stabilizes microtubules and affects affinity and processivity of microtubule motors. This modification has a role in multiple cellular functions, ranging from cell motility, cell cycle progression or cell differentiation to intracellular trafficking and signaling.

The protein localises to the cytoplasm. It is found in the cytoskeleton. It carries out the reaction GTP + H2O = GDP + phosphate + H(+). Functionally, tubulin is the major constituent of microtubules, a cylinder consisting of laterally associated linear protofilaments composed of alpha- and beta-tubulin heterodimers. Microtubules grow by the addition of GTP-tubulin dimers to the microtubule end, where a stabilizing cap forms. Below the cap, tubulin dimers are in GDP-bound state, owing to GTPase activity of alpha-tubulin. In Neospora caninum (Coccidian parasite), this protein is Tubulin alpha chain (TUBA).